The following is a 537-amino-acid chain: Cytoplasmic dynein 2 intermediate chain 2 (537 aa).

Ser15 is subject to Phosphoserine. Residues 80–93 are DYNLL2 binding; sequence RTHADAQVQTEAPE. The DYNLRB1 binding stretch occupies residues 107 to 132; that stretch reads LRLEAFLRRVEAMVIRELNNNWQSHA. 5 WD repeats span residues 216–256, 265–309, 391–431, 434–474, and 481–521; these read EVPS…DPLL, THTD…QLRL, PHGG…PLTS, LSHK…QKPT, and QDGS…TEQG.

This sequence belongs to the dynein light intermediate chain family. The cytoplasmic dynein 2 complex consists of two catalytic heavy chains (HCs) and a number of non-catalytic subunits presented by intermediate chains (ICs), light intermediate chains (LICs) and light chains (LCs). Among them, a heavy chain (DYNC2H1), two intermediate chains (DYNC2I2 and DYNC2I1), a light intermediate chain (DYNC2LI1), and a light chain (DYNLT2B) are unique to the cytoplasmic dynein complex 2, but a subset of the light chains are also shared by dynein-1 and dynein-2 complexes. Interacts with DYNC2I1; their C-terminal domains each bind a copy of the heavy chain, and their extended N-terminal regions are held together by an array of light chain dimers. Interacts with DYNLL2; this interaction is essential for dynein-2-mediated retrograde trafficking of ciliary proteins. Interacts with DYNLRB1; this interaction is essential for dynein-2-mediated retrograde trafficking of ciliary proteins. Interacts (via the WD domains) with MAP3K7 and TAB3. Interacts (via WD domains) with TAB2 (via C-terminus). Interacts (via WD domains) with TRAF6 (via TRAF-type domains). Expressed in brain, thymus, heart, lung, liver, spleen, kidney, testis and intestine.

It is found in the cytoplasm. The protein localises to the cytoskeleton. The protein resides in the cilium basal body. Its subcellular location is the cilium axoneme. It localises to the cell projection. It is found in the cilium. The protein localises to the microtubule organizing center. The protein resides in the centrosome. Its subcellular location is the filopodium. In terms of biological role, acts as one of several non-catalytic accessory components of the cytoplasmic dynein 2 complex (dynein-2 complex), a motor protein complex that drives the movement of cargos along microtubules within cilia and flagella in concert with the intraflagellar transport (IFT) system. DYNC2I2 plays a major role in retrograde ciliary protein trafficking and in ciliogenesis. Required also to maintain a functional transition zone. Its function is as follows. Acts as a negative regulator of the Toll-like and IL-1R receptor signaling pathways. Inhibits the MAP3K7-induced NF-kappa-B activation pathway. Inhibits MAP3K7 phosphorylation at 'Thr-184' and 'Thr-187' upon Il-1 beta stimulation. This is Cytoplasmic dynein 2 intermediate chain 2 (Dync2i2) from Mus musculus (Mouse).